Reading from the N-terminus, the 345-residue chain is KRR1 small subunit processome component homolog (345 aa).

A KH domain is found at 125-193 (DIIKIGNLVH…VRDIVLETMN (69 aa)). A compositionally biased stretch (basic residues) spans 232 to 245 (NISKRKQPKVKKQK). 2 disordered regions span residues 232 to 260 (NISKRKQPKVKKQKKEYTPFPPSQPESKV) and 273 to 345 (QEQK…ARSS). Residues 270–298 (FLNQEQKQAKRNQERTEKQKEAAKRQDER) adopt a coiled-coil conformation. 2 stretches are compositionally biased toward basic and acidic residues: residues 276–302 (KQAKRNQERTEKQKEAAKRQDERRNKD) and 315–330 (RKKEDGSSSSKVDVKA). Residues 331-345 (LKAKLIKANKKARSS) are compositionally biased toward basic residues.

This sequence belongs to the KRR1 family. Monomer. Component of the ribosomal small subunit (SSU) processome.

The protein localises to the nucleus. It is found in the nucleolus. Its function is as follows. Required for 40S ribosome biogenesis. Involved in nucleolar processing of pre-18S ribosomal RNA and ribosome assembly. Binds to RNA. Required for female germline development, cell viability during eye development and for survival of dividing cells and epithelial cells during early wing disk development. The sequence is that of KRR1 small subunit processome component homolog (dbe) from Drosophila melanogaster (Fruit fly).